Here is a 251-residue protein sequence, read N- to C-terminus: uncharacterized protein (251 aa).

It belongs to the FAM243 family.

This is an uncharacterized protein from Bos taurus (Bovine).